Reading from the N-terminus, the 393-residue chain is Alpha-pyrone synthesis polyketide synthase-like Pks18 (393 aa).

The segment at 1 to 26 (MNVSAESGAPRRAGQRHEVGLAQLPP) is disordered. The active-site Nucleophile is cysteine 175. Substrate is bound at residue histidine 221.

Belongs to the thiolase-like superfamily. Chalcone/stilbene synthases family. In terms of assembly, homodimer.

It functions in the pathway lipid metabolism; fatty acid biosynthesis. Its function is as follows. Involved in the biosynthesis of tri- and tetraketide alpha-pyrones. Pks18 catalyzes the extension of medium- and long-chain aliphatic acyl-CoA substrates by using malonyl-CoA as an extender molecule to synthesize polyketide products. This Mycobacterium bovis (strain ATCC BAA-935 / AF2122/97) protein is Alpha-pyrone synthesis polyketide synthase-like Pks18 (pks18).